Here is a 493-residue protein sequence, read N- to C-terminus: Accumulates dyads protein 4 (493 aa).

Interacts with CNM67, SPO21/MPC70 and NUD1.

The protein resides in the cytoplasm. Its subcellular location is the cytoskeleton. It is found in the microtubule organizing center. It localises to the spindle pole body. Functionally, involved in the pathway that organizes the shaping and sizing of the prospore membrane (PSM) during sporulation. May be required to stabilize the outer plaque of the spindle pole body (SPB). The protein is Accumulates dyads protein 4 (ADY4) of Saccharomyces cerevisiae (strain ATCC 204508 / S288c) (Baker's yeast).